The sequence spans 119 residues: Large ribosomal subunit protein uL18 (119 aa).

It belongs to the universal ribosomal protein uL18 family. Part of the 50S ribosomal subunit; part of the 5S rRNA/L5/L18/L25 subcomplex. Contacts the 5S and 23S rRNAs.

Its function is as follows. This is one of the proteins that bind and probably mediate the attachment of the 5S RNA into the large ribosomal subunit, where it forms part of the central protuberance. The chain is Large ribosomal subunit protein uL18 from Xanthomonas axonopodis pv. citri (strain 306).